Consider the following 4687-residue polypeptide: Plectin (4687 aa).

Residues 1 to 1473 (MVAGMLMPLD…SELTTLTSQY (1473 aa)) are globular 1. Position 21 is a phosphoserine (arginine 21). Valine 26 carries the post-translational modification Phosphotyrosine. The segment at 111 to 158 (RRRSPHVQTMQGPLGCPPKRGPLPAEDPAREERQVYRRKEREEGAPET) is disordered. Residues 137–154 (DPAREERQVYRRKEREEG) show a composition bias toward basic and acidic residues. Residues 181 to 406 (DERDRVQKKT…YVSSLYDAMP (226 aa)) are actin-binding. 2 consecutive Calponin-homology (CH) domains span residues 185-288 (RVQK…LHFK) and 301-406 (MTAK…DAMP). The Spectrin 1 repeat unit spans residues 648–722 (LQSTQRRPEL…ERARNDESQL (75 aa)). Serine 723 is modified (phosphoserine). Spectrin repeat units lie at residues 743 to 827 (KLLN…REDH) and 840 to 933 (LQTQ…AIVQ). Threonine 818 is subject to Phosphothreonine. The 58-residue stretch at 944 to 1001 (RGHVPLLAVCDYKQVEVTVHKGDQCQLVGPAQPFHWKVLSSSGSEAAVPSVCFLVPPP) folds into the SH3 domain. Phosphoserine is present on serine 1050. The Spectrin 4 repeat unit spans residues 1318–1418 (RERVTQLLER…QKFAKQYINA (101 aa)). Residue serine 1438 is modified to Phosphoserine. Coiled-coil stretches lie at residues 1472 to 1692 (QYIK…ERWL) and 1724 to 2760 (SFAE…TSQA). Residues 1474 to 2758 (IKFISETLRR…LAHSEEIATS (1285 aa)) are central fibrous rod domain. Positions 1623–1647 (EEAEAQKRQAQEEAERLRRQVQDES) are disordered. Serine 1724 bears the Phosphoserine mark. Residue lysine 1728 is modified to N6-acetyllysine. Disordered regions lie at residues 1741–1764 (VTVT…ERAR), 1796–1846 (SLAQ…GTAQ), 2096–2139 (EDTM…AEEE), 2164–2188 (LRER…KRLQ), and 2218–2307 (RLRS…DAEM). 3 stretches are compositionally biased toward basic and acidic residues: residues 1801 to 1839 (DAEK…KQRQ), 2096 to 2111 (EDTM…EAAR), and 2119 to 2131 (EEQR…ERVQ). Low complexity predominate over residues 2173-2182 (ARQLQLAQEA). Residues 2218-2261 (RLRSEAEAARRAAEEAEEAREQAEREAAQSRKQVEEAERLKQSA) are compositionally biased toward basic and acidic residues. The segment covering 2262–2275 (EEQAQAQAQAQAAA) has biased composition (low complexity). A compositionally biased stretch (basic and acidic residues) spans 2276-2291 (EKLRKEAEQEAARRAQ). Phosphoserine is present on serine 2634. Residue lysine 2639 is modified to N6-acetyllysine. The tract at residues 2671-2710 (QEEQQRQQQQMEQEKQELVASMEEARRRQREAEEGVRRKQ) is disordered. The span at 2682 to 2710 (EQEKQELVASMEEARRRQREAEEGVRRKQ) shows a compositional bias: basic and acidic residues. The tract at residues 2759 to 4687 (QAAATKALPN…SLGGPESAVA (1929 aa)) is globular 2. A Phosphoserine modification is found at serine 2777. Phosphotyrosine is present on tyrosine 2784. 6 Plectin repeats span residues 2791-2828 (QKVP…REDV), 2829-2866 (RHYL…PGTA), 2867-2904 (LILL…PELH), 2905-2942 (HKLL…RDHG), 2943-2980 (IRLL…EEMN), and 2984-3018 (ADPS…PETG). Serine 2805 is modified (phosphoserine). Position 2889 is a phosphothreonine (threonine 2889). Tyrosine 3036 is modified (phosphotyrosine). An N6-acetyllysine mark is found at lysine 3056 and lysine 3094. 6 Plectin repeats span residues 3119 to 3156 (ALVP…ADEV), 3157 to 3194 (RQAL…PEVA), 3195 to 3232 (VALL…PEMH), 3233 to 3270 (EKLL…REQG), 3271 to 3308 (LRLL…KETN), and 3311 to 3346 (LTSP…QLTG). Tyrosine 3365 is modified (phosphotyrosine). Lysine 3423 carries the post-translational modification N6-acetyllysine. Plectin repeat units follow at residues 3488–3525 (RTLL…ASTA), 3526–3563 (TLLL…PELH), 3564–3601 (EKLL…RDHA), 3602–3639 (IRLL…EEMN), and 3643–3677 (ADPS…PETG). A Phosphoserine modification is found at serine 3583. Threonine 3788 is modified (phosphothreonine). At tyrosine 3793 the chain carries Phosphotyrosine. Plectin repeat units follow at residues 3823–3860 (WRYL…AEVA), 3861–3898 (RLLL…PELH), 3899–3936 (DRLL…AEEA), 3937–3974 (LRLL…KDTH), and 3978–4011 (SEPS…DNSG). At threonine 4033 the chain carries Phosphothreonine. Serine 4057 is modified (phosphoserine). Plectin repeat units follow at residues 4066–4103 (QKFL…PGTA), 4104–4141 (FELL…PEFK), 4142–4179 (DKLL…KDHG), 4180–4217 (IRLL…EEMN), 4221–4255 (TDPS…PQTG), and 4268–4308 (RKTS…HQTY). The tract at residues 4253–4303 (QTGLCLLPLKEKKRERKTSSKSSVRKRRVVIVDPETGKEMSVYEAYRKGLI) is binding to intermediate filaments. Residues serine 4385, serine 4387, serine 4388, serine 4389, serine 4392, serine 4393, serine 4394, and serine 4395 each carry the phosphoserine modification. Tyrosine 4396 is modified (phosphotyrosine). A phosphoserine mark is found at serine 4399 and serine 4409. Plectin repeat units follow at residues 4411 to 4448 (SDPT…NITG), 4449 to 4486 (QRLL…KIMV), 4487 to 4524 (DRIN…YEAG), 4525 to 4562 (QRFL…ARTA), and 4563 to 4600 (QKLR…EGTG). The residue at position 4414 (threonine 4414) is a Phosphothreonine. At threonine 4542 the chain carries Phosphothreonine; by CDK1. Phosphoserine is present on residues serine 4610 and serine 4616. Residues 4614-4674 (YYSPYSVSGS…SGYGRRYASG (61 aa)) show a composition bias toward low complexity. The disordered stretch occupies residues 4614–4687 (YYSPYSVSGS…SLGGPESAVA (74 aa)). Position 4618 is a phosphotyrosine (tyrosine 4618). Serine 4619, serine 4621, and serine 4625 each carry phosphoserine. Position 4626 is a phosphothreonine (threonine 4626). The tract at residues 4628-4643 (GSRTGSRTGSRAGSRR) is 4 X 4 AA tandem repeats of G-S-R-X. The residue at position 4629 (serine 4629) is a Phosphoserine. An omega-N-methylarginine mark is found at arginine 4630 and arginine 4643. Residues serine 4645 and serine 4678 each carry the phosphoserine modification.

Belongs to the plakin or cytolinker family. Homodimer or homotetramer. Interacts (via actin-binding domain) with SYNE3. Interacts (via calponin-homology (CH) 1 domain) with VIM (via rod region). Interacts (via N-terminus) with DST isoform 2 (via N-terminus). Interacts with FER. Interacts with TOR1A. Interacts with ANK3. Identified in complexes that contain VIM, EZR, AHNAK, BFSP1, BFSP2, ANK2, PLEC, PRX and spectrin. Phosphorylated by CDK1; regulates dissociation from intermediate filaments during mitosis. Isoform 2 is phosphorylated on Ser-21 and Tyr-26. As to expression, widely expressed with highest expression in skeletal muscle and lowest in thymus.

It is found in the cytoplasm. It localises to the cytoskeleton. Its subcellular location is the cell junction. The protein localises to the hemidesmosome. The protein resides in the cell projection. It is found in the podosome. Interlinks intermediate filaments with microtubules and microfilaments and anchors intermediate filaments to desmosomes or hemidesmosomes. May be involved not only in the cross-linking and stabilization of cytoskeletal intermediate filaments network, but also in the regulation of their dynamics. The sequence is that of Plectin (Plec) from Rattus norvegicus (Rat).